A 132-amino-acid polypeptide reads, in one-letter code: NADPH-dependent 7-cyano-7-deazaguanine reductase (132 aa).

Cys48 (thioimide intermediate) is an active-site residue. The active-site Proton donor is the Asp55. Residues 70–72 (LEL) and 89–90 (ME) contribute to the substrate site.

This sequence belongs to the GTP cyclohydrolase I family. QueF type 1 subfamily.

It localises to the cytoplasm. It carries out the reaction 7-aminomethyl-7-carbaguanine + 2 NADP(+) = 7-cyano-7-deazaguanine + 2 NADPH + 3 H(+). Its pathway is tRNA modification; tRNA-queuosine biosynthesis. In terms of biological role, catalyzes the NADPH-dependent reduction of 7-cyano-7-deazaguanine (preQ0) to 7-aminomethyl-7-deazaguanine (preQ1). In Elusimicrobium minutum (strain Pei191), this protein is NADPH-dependent 7-cyano-7-deazaguanine reductase.